A 281-amino-acid polypeptide reads, in one-letter code: Ribosomal protein L11 methyltransferase (281 aa).

The S-adenosyl-L-methionine site is built by Thr-133, Gly-154, Asp-175, and Asn-216.

Belongs to the methyltransferase superfamily. PrmA family.

The protein resides in the cytoplasm. The catalysed reaction is L-lysyl-[protein] + 3 S-adenosyl-L-methionine = N(6),N(6),N(6)-trimethyl-L-lysyl-[protein] + 3 S-adenosyl-L-homocysteine + 3 H(+). In terms of biological role, methylates ribosomal protein L11. In Campylobacter jejuni subsp. jejuni serotype O:23/36 (strain 81-176), this protein is Ribosomal protein L11 methyltransferase.